A 354-amino-acid polypeptide reads, in one-letter code: MCVEELEGAERLDFGGVAELETTPADFEMEKVCENTVSLDFKQARSSSFVPVIRSGDWSDIGGRDYMEDAHVCISDLANNFGHNSVDDEIISFYGVFDGHGGKDAAHYVRDNLPRVIVEDADFPLELEKVVRRSFVQTDSQFAERCSHQNALSSGTTALTAMIFGRSLLVANAGDCRAVLSRRGTAIEMSKDHRTCCLNERKRIESLGGYVDDGYLNGQLAVTRALGDWHLEGLKEVGEPGGPLSAEPELKMITLTKEDEFLIIGSDGIWDFFSNQNAVDFTRKRLQEHNDLRLCCKQIVEEAIRRGASDNLTAVMVSFHQEAPPQLRVNRTGRVERSISAEGLHSLRVLLEGQ.

The region spanning 54–319 (RSGDWSDIGG…DNLTAVMVSF (266 aa)) is the PPM-type phosphatase domain. Residues D98, G99, D267, and D310 each coordinate Mn(2+).

Belongs to the PP2C family. Mg(2+) serves as cofactor. It depends on Mn(2+) as a cofactor.

The catalysed reaction is O-phospho-L-seryl-[protein] + H2O = L-seryl-[protein] + phosphate. The enzyme catalyses O-phospho-L-threonyl-[protein] + H2O = L-threonyl-[protein] + phosphate. The chain is Probable protein phosphatase 2C 27 from Oryza sativa subsp. japonica (Rice).